Reading from the N-terminus, the 846-residue chain is Enhancer of polycomb-like protein 1 (846 aa).

5 disordered regions span residues 169-204, 391-466, 587-607, 682-702, and 759-804; these read FNSK…KGDA, TSDE…APDA, EKKR…QSPK, AADA…PQPN, and QVQA…GVKQ. A compositionally biased stretch (basic and acidic residues) spans 180–203; that stretch reads VKSDKEQGRGMRVKGKDREKEKGD. A compositionally biased stretch (polar residues) spans 411 to 426; that stretch reads PSLSGQTPLTSGQSSS. The span at 432-452 shows a compositional bias: basic and acidic residues; the sequence is TDKDREERAQRERYDAQRNAE. Residues 434–490 adopt a coiled-coil conformation; it reads KDREERAQRERYDAQRNAERSGILSGRSNAPDALKERLQALQQKTEEMLARKKEQDA. Positions 686–702 are enriched in pro residues; that stretch reads KPPPAPIFQKPPAPQPN. The span at 759–773 shows a compositional bias: low complexity; the sequence is QVQAQGQGHPQAHLQ. The segment covering 783 to 796 has biased composition (polar residues); the sequence is NGVNSPMPNGQQML.

Belongs to the enhancer of polycomb family. As to quaternary structure, component of the NuA4 histone acetyltransferase complex.

The protein localises to the nucleus. Its function is as follows. Component of the NuA4 histone acetyltransferase complex which is involved in transcriptional activation of selected genes principally by acetylation of nucleosomal histone H4 and H2A. The NuA4 complex is also involved in DNA repair. Involved in gene silencing by neighboring heterochromatin, blockage of the silencing spreading along the chromosome, and required for cell cycle progression through G2/M. This is Enhancer of polycomb-like protein 1 (EPL1) from Cryptococcus neoformans var. neoformans serotype D (strain JEC21 / ATCC MYA-565) (Filobasidiella neoformans).